Here is a 168-residue protein sequence, read N- to C-terminus: MAILNILEFPDPRLRTIAKPVEVVDDAVRQLIDDMFETMYEAPGIGLAATQVNVHKRIVVMDLSEDKSEPRVFINPEFEPLTEDMDQYQEGCLSVPGFYENVDRPQKVRIKALDRDGNPFEEVAEGLLAVCIQHECDHLNGKLFVDYLSTLKRDRIRKKLEKQHRQQA.

2 residues coordinate Fe cation: Cys92 and His134. The active site involves Glu135. His138 contacts Fe cation.

The protein belongs to the polypeptide deformylase family. The cofactor is Fe(2+).

The catalysed reaction is N-terminal N-formyl-L-methionyl-[peptide] + H2O = N-terminal L-methionyl-[peptide] + formate. Removes the formyl group from the N-terminal Met of newly synthesized proteins. Requires at least a dipeptide for an efficient rate of reaction. N-terminal L-methionine is a prerequisite for activity but the enzyme has broad specificity at other positions. This chain is Peptide deformylase, found in Pseudomonas aeruginosa (strain ATCC 15692 / DSM 22644 / CIP 104116 / JCM 14847 / LMG 12228 / 1C / PRS 101 / PAO1).